Reading from the N-terminus, the 207-residue chain is Small heat shock protein hspG7 (207 aa).

The sHSP domain maps to 30–207 (KTIIDILPPM…YSNTIKININ (178 aa)). Composition is skewed to low complexity over residues 84–101 (QQQQ…SSST) and 122–135 (STTS…ATTT). Residues 84 to 149 (QQQQLVIEKS…EDENKTKSSD (66 aa)) form a disordered region. Positions 136 to 149 (KENKEDENKTKSSD) are enriched in basic and acidic residues.

It belongs to the small heat shock protein (HSP20) family.

This chain is Small heat shock protein hspG7 (hspG7), found in Dictyostelium discoideum (Social amoeba).